Consider the following 217-residue polypeptide: Cytochrome b5 domain-containing protein 1 (217 aa).

One can recognise a Cytochrome b5 heme-binding domain in the interval 6 to 72 (PRYFTPREVS…NPKTGDVKTH (67 aa)). The heme site is built by His-41 and His-72.

It belongs to the cytochrome b5 family.

It localises to the cytoplasm. It is found in the cytoskeleton. The protein resides in the cilium axoneme. In terms of biological role, radial spoke stalk protein that binds heme under oxidizing conditions. Required for the coordinated beating of multiple cilia maybe by functioning in a redox signaling pathway. The protein is Cytochrome b5 domain-containing protein 1 (cyb5d1) of Xenopus laevis (African clawed frog).